We begin with the raw amino-acid sequence, 141 residues long: Nucleoside diphosphate kinase (141 aa).

K11, F59, R87, T93, R104, and N114 together coordinate ATP. The active-site Pros-phosphohistidine intermediate is the H117.

This sequence belongs to the NDK family. Homotetramer. Mg(2+) serves as cofactor.

It localises to the cytoplasm. The enzyme catalyses a 2'-deoxyribonucleoside 5'-diphosphate + ATP = a 2'-deoxyribonucleoside 5'-triphosphate + ADP. The catalysed reaction is a ribonucleoside 5'-diphosphate + ATP = a ribonucleoside 5'-triphosphate + ADP. In terms of biological role, major role in the synthesis of nucleoside triphosphates other than ATP. The ATP gamma phosphate is transferred to the NDP beta phosphate via a ping-pong mechanism, using a phosphorylated active-site intermediate. This is Nucleoside diphosphate kinase from Pseudomonas putida (strain GB-1).